Reading from the N-terminus, the 631-residue chain is MNSSDEEKQLQLITSLKEQAIGEYEDLRAENQKTKEKCDKIRQERDEAVKKLEEFQKISHMVIEEVNFMQNHLEIEKTCRESAEALATKLNKENKTLKRISMLYMAKLGPDVITEEINIDDEDSTTDTDGAAETCVSVQCQKQIKELRDQIVSVQEEKKILAIELENLKSKLVEVIEEVNKVKQEKTVLNSEVLEQRKVLEKCNRVSMLAVEEYEEMQVNLELEKDLRKKAESFAQEMFIEQNKLKRQSHLLLQSSIPDQQLLKALDENAKLTQQLEEERIQHQQKVKELEEQLENETLHKEIHNLKQQLELLEEDKKELELKYQNSEEKARNLKHSVDELQKRVNQSENSVPPPPPPPPPLPPPPPNPIRSLMSMIRKRSHPSGSGAKKEKATQPETTEEVTDLKRQAVEEMMDRIKKGVHLRPVNQTARPKTKPESSKGCESAVDELKGILGTLNKSTSSRSLKSLDPENSETELERILRRRKVTAEADSSSPTGILATSESKSMPVLGSVSSVTKTALNKKTLEAEFNSPSPPTPEPGEGPRKLEGCTSSKVTFQPPSSIGCRKKYIDGEKQAEPVVVLDPVSTHEPQTKDQVAEKDPTQHKEDEGEIQPENKEDSIENVRETDSSNC.

Residue methionine 1 is modified to N-acetylmethionine. Serine 3 and serine 4 each carry phosphoserine. Residues 7 to 353 adopt a coiled-coil conformation; the sequence is EKQLQLITSL…RVNQSENSVP (347 aa). A Phosphoserine; by PAK1 modification is found at serine 101. The residue at position 249 (serine 249) is a Phosphoserine. The disordered stretch occupies residues 343–511; sequence KRVNQSENSV…SESKSMPVLG (169 aa). Over residues 352 to 369 the composition is skewed to pro residues; it reads VPPPPPPPPPLPPPPPNP. Serine 375 bears the Phosphoserine mark. Over residues 403-418 the composition is skewed to basic and acidic residues; the sequence is TDLKRQAVEEMMDRIK. Positions 456 to 465 are enriched in polar residues; sequence LNKSTSSRSL. Serine 473 carries the post-translational modification Phosphoserine. The residue at position 487 (threonine 487) is a Phosphothreonine. The span at 490–505 shows a compositional bias: polar residues; that stretch reads ADSSSPTGILATSESK. Serine 494 is modified (phosphoserine). Threonine 496 is modified (phosphothreonine). Residues serine 506, serine 515, serine 532, and serine 534 each carry the phosphoserine modification. Disordered stretches follow at residues 524–566 and 579–631; these read KTLE…IGCR and VVVL…SSNC. At threonine 537 the chain carries Phosphothreonine. Residues 550–561 are compositionally biased toward polar residues; it reads CTSSKVTFQPPS. A compositionally biased stretch (basic and acidic residues) spans 590-631; that stretch reads PQTKDQVAEKDPTQHKEDEGEIQPENKEDSIENVRETDSSNC.

This sequence belongs to the shootin family. As to quaternary structure, interacts with L1CAM; this interaction occurs in axonal growth cones. Interacts with actin filament retrograde flow; this interaction is enhanced in a netrin-1- and PAK1-dependent manner and promotes F-actin-substrate coupling and concomitant formation of traction forces at axonal growth cones. Interacts with RUFY3. Interacts with PFN2. Interacts (via N-terminus) with KIF20B; this interaction is direct and promotes the association of SHTN1 to microtubules in primary neurons. Associates with microtubule. In terms of processing, phosphorylated on Ser-101 and Ser-249 by PAK1 through a CDC42- and RAC1-dependent signaling pathway, which enhances its association with F-actin retrograde flow in filopodia and lamellipodia of axonal growth cones. Phosphorylation on Ser-101 and Ser-249 is increased by netrin-1.

The protein resides in the perikaryon. It localises to the cell projection. Its subcellular location is the axon. The protein localises to the growth cone. It is found in the cytoplasm. The protein resides in the cytoskeleton. It localises to the filopodium. Its subcellular location is the lamellipodium. Functionally, involved in the generation of internal asymmetric signals required for neuronal polarization and neurite outgrowth. Mediates netrin-1-induced F-actin-substrate coupling or 'clutch engagement' within the axon growth cone through activation of CDC42, RAC1 and PAK1-dependent signaling pathway, thereby converting the F-actin retrograde flow into traction forces, concomitantly with filopodium extension and axon outgrowth. Plays a role in cytoskeletal organization by regulating the subcellular localization of phosphoinositide 3-kinase (PI3K) activity at the axonal growth cone. Also plays a role in regenerative neurite outgrowth. In the developing cortex, cooperates with KIF20B to promote both the transition from the multipolar to the bipolar stage and the radial migration of cortical neurons from the ventricular zone toward the superficial layer of the neocortex. Involved in the accumulation of phosphatidylinositol 3,4,5-trisphosphate (PIP3) in the growth cone of primary hippocampal neurons. The sequence is that of Shootin-1 from Homo sapiens (Human).